The chain runs to 1715 residues: Rho guanine nucleotide exchange factor TIAM2 (1715 aa).

Polar residues-rich tracts occupy residues 1-22 (MGNSESQYTFQGSKNHSNTVTG) and 218-229 (GSPSSQRPSPTD). Disordered regions lie at residues 1–27 (MGNSESQYTFQGSKNHSNTVTGAKQKP), 174–249 (FHNG…WYDS), 263–294 (SFLAPSTPDPSLPSSFPPSDTKKPFNQSSSLS), and 385–418 (TGSLSRKKRKLQEPRSMEGSEYFDSHSDGLNAEG). Residue Gly2 is the site of N-myristoyl glycine attachment. Residues 235–245 (SKGSSLSSESS) show a composition bias toward low complexity. Residues 395-411 (LQEPRSMEGSEYFDSHS) show a composition bias toward basic and acidic residues. The PH 1 domain maps to 504 to 618 (VVRKAGWLFF…WVTAIHSACA (115 aa)). The stretch at 665–692 (PKNRKAIENQIRQWEQNLEKFHMDLFRM) forms a coiled coil. The 72-residue stretch at 831–902 (VQTYVHFQDN…YMQEQVYDEI (72 aa)) folds into the RBD domain. The region spanning 911 to 997 (DVQLTKTGDM…GLTLVARPVT (87 aa)) is the PDZ domain. A disordered region spans residues 1092-1113 (THTNSMEAPTESHDPPPRPLAR). One can recognise a DH domain in the interval 1120 to 1314 (RLRKVIQELV…EKVASHINEM (195 aa)). In terms of domain architecture, PH 2 spans 1347–1478 (LLMHSTVSWL…KVIRSILREN (132 aa)). A disordered region spans residues 1515 to 1582 (SLKGLRTSSS…EGLAEFPDGL (68 aa)). The span at 1522 to 1532 (SSSSEWPSEPS) shows a compositional bias: low complexity. The span at 1533 to 1552 (KGNSLDSDECSLSSGTQSSG) shows a compositional bias: polar residues. Residues 1557 to 1572 (ESRRDSKSTELEKDAQ) are compositionally biased toward basic and acidic residues. At Ser1604 the chain carries Phosphoserine. Thr1662 is modified (phosphothreonine).

Belongs to the TIAM family. Interacts with MAP1A, MAP1B, PARP1 and YWHAE. Interacts with CD44, PARD3 and MAPK8IP2. Post-translationally, phosphorylated on serine and threonine residues. Phosphorylated on Thr-1662 by Rho-kinase. Its phosphorylation by Rho-kinase inhibits its guanine nucleotide exchange activity, its interaction with MAP1A, MAP1B, PARP1 and YWHAE and reduces its ability to promote neurite growth. Expressed in fetal brain (at protein level). Expressed in the olfactory bulb, cortical plate of the cerebral cortex, caudate putamen, hippocampus, ependymal cells of the lateral surface of the lateral ventricles of the brain. Weakly expressed in heart, lung, liver, skeletal muscle, kidney and testis.

The protein resides in the cytoplasm. The protein localises to the cell projection. Its subcellular location is the lamellipodium. It is found in the filopodium. It localises to the growth cone. The protein resides in the neuron projection. The protein localises to the perikaryon. In terms of biological role, modulates the activity of RHO-like proteins and connects extracellular signals to cytoskeletal activities. Acts as a GDP-dissociation stimulator protein that stimulates the GDP-GTP exchange activity of RHO-like GTPases and activates them. Activates specifically RAC1, but not CDC42 and RHOA. Mediates extracellular laminin signals to activate Rac1, contributing to neurite growth. Involved in lamellipodial formation and advancement of the growth cone of embryonic hippocampal neurons. Promotes migration of neurons in the cerebral cortex. When overexpressed, induces membrane ruffling accompanied by the accumulation of actin filaments along the altered plasma membrane. This chain is Rho guanine nucleotide exchange factor TIAM2, found in Mus musculus (Mouse).